Reading from the N-terminus, the 1183-residue chain is Probable RNA-dependent RNA polymerase 4 (1183 aa).

Belongs to the RdRP family. Expressed in shoot apical meristem (SAM) and panicles.

It catalyses the reaction RNA(n) + a ribonucleoside 5'-triphosphate = RNA(n+1) + diphosphate. Functionally, probably involved in the RNA silencing pathway and required for the generation of small interfering RNAs (siRNAs). This chain is Probable RNA-dependent RNA polymerase 4 (RDR4), found in Oryza sativa subsp. japonica (Rice).